Consider the following 293-residue polypeptide: Glycine--tRNA ligase alpha subunit (293 aa).

The protein belongs to the class-II aminoacyl-tRNA synthetase family. As to quaternary structure, tetramer of two alpha and two beta subunits.

Its subcellular location is the cytoplasm. It carries out the reaction tRNA(Gly) + glycine + ATP = glycyl-tRNA(Gly) + AMP + diphosphate. This chain is Glycine--tRNA ligase alpha subunit, found in Oceanobacillus iheyensis (strain DSM 14371 / CIP 107618 / JCM 11309 / KCTC 3954 / HTE831).